The sequence spans 259 residues: Putative hydro-lyase Bphyt_4813 (259 aa).

This sequence belongs to the D-glutamate cyclase family.

In Paraburkholderia phytofirmans (strain DSM 17436 / LMG 22146 / PsJN) (Burkholderia phytofirmans), this protein is Putative hydro-lyase Bphyt_4813.